Here is a 419-residue protein sequence, read N- to C-terminus: Dual specificity protein phosphatase 7 (419 aa).

The disordered stretch occupies residues 1 to 41 (MKNQLRGPPVRAHMSTSGAAAAGGTRAGSEPGAGSGSSAGI). Residues 15 to 30 (STSGAAAAGGTRAGSE) are compositionally biased toward low complexity. Positions 31–41 (PGAGSGSSAGI) are enriched in gly residues. The region spanning 68–187 (GGASLLLLDC…FQTEYSEHCE (120 aa)) is the Rhodanese domain. A disordered region spans residues 216–240 (CSDGESDRELPSSATESDGSPVPSS). Residues 227–240 (SSATESDGSPVPSS) are compositionally biased toward polar residues. Residues 244–387 (FPVQILPYLY…LLDFERTLGL (144 aa)) enclose the Tyrosine-protein phosphatase domain. Cysteine 331 serves as the catalytic Phosphocysteine intermediate. Residue 331-337 (CLAGISR) participates in substrate binding.

Belongs to the protein-tyrosine phosphatase family. Non-receptor class dual specificity subfamily. In terms of assembly, interacts with MAPK1/ERK2; the interaction enhances DUSP7 phosphatase activity.

It localises to the cytoplasm. It catalyses the reaction O-phospho-L-tyrosyl-[protein] + H2O = L-tyrosyl-[protein] + phosphate. It carries out the reaction O-phospho-L-seryl-[protein] + H2O = L-seryl-[protein] + phosphate. The catalysed reaction is O-phospho-L-threonyl-[protein] + H2O = L-threonyl-[protein] + phosphate. With respect to regulation, strongly inhibited by sodium orthovanadate. Functionally, dual specificity protein phosphatase. Shows high activity towards MAPK1/ERK2. Also has lower activity towards MAPK14 and MAPK8. In arrested oocytes, plays a role in meiotic resumption. Promotes nuclear envelope breakdown and activation of the CDK1/Cyclin-B complex in oocytes, probably by dephosphorylating and inactivating the conventional protein kinase C (cPKC) isozyme PRKCB. May also inactivate PRKCA and/or PRKCG. Also important in oocytes for normal chromosome alignment on the metaphase plate and progression to anaphase, where it might regulate activity of the spindle-assembly checkpoint (SAC) complex. This is Dual specificity protein phosphatase 7 from Rattus norvegicus (Rat).